Reading from the N-terminus, the 314-residue chain is Olfactory receptor 2W3 (314 aa).

Topologically, residues 1–25 (MDGTNGSTQTHFILLGFSDRPHLER) are extracellular. An N-linked (GlcNAc...) asparagine glycan is attached at N5. Residues 26-49 (ILFVVILIAYLLTLVGNTTIILVS) traverse the membrane as a helical segment. Residues 50–57 (RLDPHLHT) are Cytoplasmic-facing. The chain crosses the membrane as a helical span at residues 58–79 (PMYFFLAHLSFLDLSFTTSSIP). The Extracellular portion of the chain corresponds to 80–100 (QLLYNLNGCDKTISYMGCAIQ). Residues 101–120 (LFLFLGLGGVECLLLAVMAY) form a helical membrane-spanning segment. The Cytoplasmic segment spans residues 121–139 (DRCVAICKPLHYMVIMNPR). Residues 140 to 158 (LCRGLVSVTWGCGVANSLA) form a helical membrane-spanning segment. Over 159-195 (MSPVTLRLPRCGHHEVDHFLREMPALIRMACVSTVAI) the chain is Extracellular. A helical membrane pass occupies residues 196–219 (EGTVFVLAVGVVLSPLVFILLSYS). Topologically, residues 220 to 236 (YIVRAVLQIRSASGRQK) are cytoplasmic. Residues 237–259 (AFGTCGSHLTVVSLFYGNIIYMY) form a helical membrane-spanning segment. Residues 260–272 (MQPGASSSQDQGM) are Extracellular-facing. The helical transmembrane segment at 273–292 (FLMLFYNIVTPLLNPLIYTL) threads the bilayer. Residues 293–314 (RNREVKGALGRLLLGKRELGKE) lie on the Cytoplasmic side of the membrane.

This sequence belongs to the G-protein coupled receptor 1 family.

The protein localises to the cell membrane. In terms of biological role, odorant receptor. The sequence is that of Olfactory receptor 2W3 (OR2W3) from Homo sapiens (Human).